Here is a 141-residue protein sequence, read N- to C-terminus: ATP synthase F(0) complex subunit C3, mitochondrial (141 aa).

Residues 1–66 (MFACAKLACT…REFQTTAVNR (66 aa)) constitute a mitochondrion transit peptide. Residues 82–102 (VGVAGSGAGIGTVFGSLIIGY) traverse the membrane as a helical segment. N6,N6,N6-trimethyllysine is present on Lys109. A helical membrane pass occupies residues 117 to 137 (ILGFALSEAMGLFCLMVAFLI).

It belongs to the ATPase C chain family. F-type ATPases have 2 components, CF(1) - the catalytic core - and CF(0) - the membrane proton channel. CF(1) has five subunits: alpha(3), beta(3), gamma(1), delta(1), epsilon(1). CF(0) has three main subunits: a, b and c. Interacts with TMEM70 and TMEM242. Post-translationally, trimethylated by ATPSCKMT at Lys-109. Methylation is required for proper incorporation of the C subunit into the ATP synthase complex and mitochondrial respiration.

The protein resides in the mitochondrion membrane. In terms of biological role, mitochondrial membrane ATP synthase (F(1)F(0) ATP synthase or Complex V) produces ATP from ADP in the presence of a proton gradient across the membrane which is generated by electron transport complexes of the respiratory chain. F-type ATPases consist of two structural domains, F(1) - containing the extramembraneous catalytic core and F(0) - containing the membrane proton channel, linked together by a central stalk and a peripheral stalk. During catalysis, ATP synthesis in the catalytic domain of F(1) is coupled via a rotary mechanism of the central stalk subunits to proton translocation. Part of the complex F(0) domain. A homomeric c-ring of probably 10 subunits is part of the complex rotary element. This is ATP synthase F(0) complex subunit C3, mitochondrial from Bos taurus (Bovine).